Here is a 351-residue protein sequence, read N- to C-terminus: ATP-dependent 6-phosphofructokinase subunit gamma (351 aa).

Heterododecamer of 4 alpha, 4 beta and 4 gamma chains. The gamma chain bridges the N-terminal halves of the alpha and beta subunits.

The protein localises to the cytoplasm. The protein operates within carbohydrate degradation; glycolysis; D-glyceraldehyde 3-phosphate and glycerone phosphate from D-glucose: step 3/4. In terms of biological role, structural subunit of pyrophosphate--fructose 6-phosphate 1-phosphotransferase. Not required for catalytic activity. Fine-tunes allosteric regulation of the ATP-PFK by ATP, fructose 2,6-bisphosphate and AMP. The chain is ATP-dependent 6-phosphofructokinase subunit gamma (PFK3) from Komagataella phaffii (strain GS115 / ATCC 20864) (Yeast).